Consider the following 313-residue polypeptide: MSSLEKRVFLDMALDEKPIGRIEIKLFTSEAPKTCENFRALCTGEVGMAPNNKARLHYKGNEIHRVVKKFMIQGGDITDGDGRGGFSIYGRYFDDEKFVLKHSKPYLLSMANKGPNSNSSQFFITTAPAPHCNGKHVVFGEVIKGREVVDVLDNLEVDGKSKPIAKVRIFNSGELVKKKKPSKTKEELAALEERKRQEAKKDIPDIPKSWLYRDNEERESDFSSKTESSRVRSRSKSPSNNYETRRGHMANSRGDRNRRTQRADRKDDFGIAVRGRGGVQFRRVRYVTPEHWRRNAPSKWQQGSYTHPVDLQP.

The region spanning 9 to 174 (FLDMALDEKP…AKVRIFNSGE (166 aa)) is the PPIase cyclophilin-type domain. 2 stretches are compositionally biased toward basic and acidic residues: residues 216 to 230 (EERESDFSSKTESSR) and 253 to 269 (RGDRNRRTQRADRKDDF). 2 disordered regions span residues 216–274 (EERE…IAVR) and 288–313 (TPEHWRRNAPSKWQQGSYTHPVDLQP).

It belongs to the cyclophilin-type PPIase family.

It catalyses the reaction [protein]-peptidylproline (omega=180) = [protein]-peptidylproline (omega=0). Its function is as follows. PPIases accelerate the folding of proteins. It catalyzes the cis-trans isomerization of proline imid ic peptide bonds in oligopeptides. Thought to function as a catalyst in the folding and modification of cuticle collagens. The polypeptide is Peptidyl-prolyl cis-trans isomerase 9 (Caenorhabditis briggsae).